A 301-amino-acid chain; its full sequence is HTH-type transcriptional regulator AbaB (301 aa).

The HTH lysR-type domain occupies 1 to 58 (MDLALLRTFVTVHRAGSFTRAAALLGLSQPAVTSQIRTLERQLGRPLFLRQARGVTPT). A DNA-binding region (H-T-H motif) is located at residues 18–37 (FTRAAALLGLSQPAVTSQIR).

It belongs to the LysR transcriptional regulatory family.

In terms of biological role, putative regulator that may be involved in stimulating antibiotic production in S.antibioticus. This is HTH-type transcriptional regulator AbaB from Streptomyces antibioticus.